The sequence spans 125 residues: MAVADLALIPDVDIDSDGVFKYVLIRVHSAPRSGAPAAESKEIVRGYKWAEYHADIYDKVSGDMQKQGCDCECLGGGRISHQSQDKKIHVYGYSMAYGPAQHAISTEKIKAKYPDYEVTWANDGY.

An N-acetylalanine modification is found at Ala2. Lys21 contributes to the substrate binding site. His53 acts as the Proton acceptor in catalysis. 94-96 (SMA) lines the substrate pocket.

The protein belongs to the janus family. Monomer. In terms of tissue distribution, expressed abundantly in heart and skeletal muscle.

Its subcellular location is the cytoplasm. It carries out the reaction N(pros)-phospho-L-histidyl-[protein] + H2O = L-histidyl-[protein] + phosphate. The enzyme catalyses N(tele)-phospho-L-histidyl-[protein] + H2O = L-histidyl-[protein] + phosphate. Exhibits phosphohistidine phosphatase activity. This Homo sapiens (Human) protein is 14 kDa phosphohistidine phosphatase (PHPT1).